Reading from the N-terminus, the 156-residue chain is SsrA-binding protein (156 aa).

Residues glycine 127–tyrosine 156 are disordered. A compositionally biased stretch (basic and acidic residues) spans aspartate 132–tyrosine 156.

The protein belongs to the SmpB family.

It localises to the cytoplasm. In terms of biological role, required for rescue of stalled ribosomes mediated by trans-translation. Binds to transfer-messenger RNA (tmRNA), required for stable association of tmRNA with ribosomes. tmRNA and SmpB together mimic tRNA shape, replacing the anticodon stem-loop with SmpB. tmRNA is encoded by the ssrA gene; the 2 termini fold to resemble tRNA(Ala) and it encodes a 'tag peptide', a short internal open reading frame. During trans-translation Ala-aminoacylated tmRNA acts like a tRNA, entering the A-site of stalled ribosomes, displacing the stalled mRNA. The ribosome then switches to translate the ORF on the tmRNA; the nascent peptide is terminated with the 'tag peptide' encoded by the tmRNA and targeted for degradation. The ribosome is freed to recommence translation, which seems to be the essential function of trans-translation. The chain is SsrA-binding protein from Exiguobacterium sp. (strain ATCC BAA-1283 / AT1b).